The following is a 207-amino-acid chain: Holliday junction branch migration complex subunit RuvA (207 aa).

The domain I stretch occupies residues 1 to 63 (MISSLRGTVL…EDSLQLFGFS (63 aa)). The domain II stretch occupies residues 64–142 (GLEQLQVFEL…ACRRPSAPSA (79 aa)). The tract at residues 142–146 (ARRPS) is flexible linker. The domain III stretch occupies residues 147-207 (APSSVSDSVL…RLGPANQAAR (61 aa)).

The protein belongs to the RuvA family. Homotetramer. Forms an RuvA(8)-RuvB(12)-Holliday junction (HJ) complex. HJ DNA is sandwiched between 2 RuvA tetramers; dsDNA enters through RuvA and exits via RuvB. An RuvB hexamer assembles on each DNA strand where it exits the tetramer. Each RuvB hexamer is contacted by two RuvA subunits (via domain III) on 2 adjacent RuvB subunits; this complex drives branch migration. In the full resolvosome a probable DNA-RuvA(4)-RuvB(12)-RuvC(2) complex forms which resolves the HJ.

Its subcellular location is the cytoplasm. The RuvA-RuvB-RuvC complex processes Holliday junction (HJ) DNA during genetic recombination and DNA repair, while the RuvA-RuvB complex plays an important role in the rescue of blocked DNA replication forks via replication fork reversal (RFR). RuvA specifically binds to HJ cruciform DNA, conferring on it an open structure. The RuvB hexamer acts as an ATP-dependent pump, pulling dsDNA into and through the RuvAB complex. HJ branch migration allows RuvC to scan DNA until it finds its consensus sequence, where it cleaves and resolves the cruciform DNA. This Leifsonia xyli subsp. xyli (strain CTCB07) protein is Holliday junction branch migration complex subunit RuvA.